The sequence spans 130 residues: Small ribosomal subunit protein uS9 (130 aa).

The protein belongs to the universal ribosomal protein uS9 family.

The protein is Small ribosomal subunit protein uS9 of Streptococcus thermophilus (strain CNRZ 1066).